Consider the following 137-residue polypeptide: Large ribosomal subunit protein uL16 (137 aa).

This sequence belongs to the universal ribosomal protein uL16 family. In terms of assembly, part of the 50S ribosomal subunit.

Its function is as follows. Binds 23S rRNA and is also seen to make contacts with the A and possibly P site tRNAs. This is Large ribosomal subunit protein uL16 from Nitrobacter winogradskyi (strain ATCC 25391 / DSM 10237 / CIP 104748 / NCIMB 11846 / Nb-255).